A 141-amino-acid polypeptide reads, in one-letter code: Hemoglobin subunit alpha (141 aa).

The Globin domain occupies 1–141 (VLSAADKTNV…VATVLTSKYR (141 aa)). A Phosphoserine modification is found at S3. N6-succinyllysine is present on K7. The residue at position 8 (T8) is a Phosphothreonine. K11 carries the N6-succinyllysine modification. The residue at position 16 (K16) is an N6-acetyllysine; alternate. N6-succinyllysine; alternate is present on K16. Y24 is subject to Phosphotyrosine. The residue at position 35 (S35) is a Phosphoserine. Position 40 is an N6-succinyllysine (K40). A Phosphoserine modification is found at S49. H58 provides a ligand contact to O2. H87 lines the heme b pocket. Position 102 is a phosphoserine (S102). T108 is modified (phosphothreonine). S124 carries the phosphoserine modification. Residues T134 and T137 each carry the phosphothreonine modification. S138 carries the phosphoserine modification.

This sequence belongs to the globin family. In terms of assembly, heterotetramer of two alpha chains and two beta chains. Red blood cells.

Functionally, involved in oxygen transport from the lung to the various peripheral tissues. In terms of biological role, hemopressin acts as an antagonist peptide of the cannabinoid receptor CNR1. Hemopressin-binding efficiently blocks cannabinoid receptor CNR1 and subsequent signaling. The chain is Hemoglobin subunit alpha (HBA) from Ctenodactylus gundi (Northern gundi).